A 483-amino-acid chain; its full sequence is tRNA-2-methylthio-N(6)-dimethylallyladenosine synthase (483 aa).

Residues 31–148 (KKLYIETQGC…LPQMLDQHHA (118 aa)) form the MTTase N-terminal domain. Cys-40, Cys-77, Cys-111, Cys-192, Cys-196, and Cys-199 together coordinate [4Fe-4S] cluster. A Radical SAM core domain is found at 178–410 (RVEGFKAFVS…QQVIKQSSIE (233 aa)). The TRAM domain occupies 413 to 477 (DAMLGKIERV…LNLVYGELLN (65 aa)).

Belongs to the methylthiotransferase family. MiaB subfamily. Monomer. [4Fe-4S] cluster serves as cofactor.

The protein resides in the cytoplasm. The enzyme catalyses N(6)-dimethylallyladenosine(37) in tRNA + (sulfur carrier)-SH + AH2 + 2 S-adenosyl-L-methionine = 2-methylsulfanyl-N(6)-dimethylallyladenosine(37) in tRNA + (sulfur carrier)-H + 5'-deoxyadenosine + L-methionine + A + S-adenosyl-L-homocysteine + 2 H(+). Functionally, catalyzes the methylthiolation of N6-(dimethylallyl)adenosine (i(6)A), leading to the formation of 2-methylthio-N6-(dimethylallyl)adenosine (ms(2)i(6)A) at position 37 in tRNAs that read codons beginning with uridine. In Acinetobacter baumannii (strain AB0057), this protein is tRNA-2-methylthio-N(6)-dimethylallyladenosine synthase.